Here is a 434-residue protein sequence, read N- to C-terminus: Glutamyl-tRNA reductase (434 aa).

Residues 57 to 60, S116, 121 to 123, and Q127 contribute to the substrate site; these read TCNR and ETQ. Catalysis depends on C58, which acts as the Nucleophile. An NADP(+)-binding site is contributed by 196–201; sequence GAGEMI.

It belongs to the glutamyl-tRNA reductase family. Homodimer.

The enzyme catalyses (S)-4-amino-5-oxopentanoate + tRNA(Glu) + NADP(+) = L-glutamyl-tRNA(Glu) + NADPH + H(+). Its pathway is porphyrin-containing compound metabolism; protoporphyrin-IX biosynthesis; 5-aminolevulinate from L-glutamyl-tRNA(Glu): step 1/2. In terms of biological role, catalyzes the NADPH-dependent reduction of glutamyl-tRNA(Glu) to glutamate 1-semialdehyde (GSA). The protein is Glutamyl-tRNA reductase of Burkholderia pseudomallei (strain 1106a).